An 851-amino-acid chain; its full sequence is Envelope glycoprotein gp160 (851 aa).

The N-terminal stretch at 1–32 (MRVKEKYQHLWRWGWRWGTMLLGMLMICSATE) is a signal peptide. The Extracellular portion of the chain corresponds to 33–679 (KLWVTVYFGV…ITNWLWYIKL (647 aa)). Cysteines 54 and 74 form a disulfide. N-linked (GlcNAc...) asparagine; by host glycans are attached at residues N88, N136, N141, N156, N160, N186, N197, N230, N234, N241, N262, N276, N295, N301, N332, N339, and N356. 5 cysteine pairs are disulfide-bonded: C119/C205, C126/C196, C131/C157, C218/C247, and C228/C239. Positions 131–156 (CTDLKNDTNTNSSSGRMIMEKGEIKN) are V1. Residues 157 to 196 (CSFNISTSKRGKVQKEYAFFYKLDIIPIDNDTTSYTLTSC) are V2. The V3 stretch occupies residues 296-330 (CTRPNNNTRKKIRIQRGPGRAFVTIGKIGNMRQAH). Cysteines 296 and 331 form a disulfide. The tract at residues 364-374 (SSGGDPEIVTH) is CD4-binding loop. Intrachain disulfides connect C378-C440 and C385-C413. The interval 385-413 (CNSTQLFNSTWSTKGSNNTEGSDTITLPC) is V4. Residues N386, N392, N401, N443, and N458 are each glycosylated (N-linked (GlcNAc...) asparagine; by host). V5 stretches follow at residues 456-466 (SNNESEIFRPG) and 458-466 (NESEIFRPG). Positions 507–527 (AVGIGALFLGFLGAAGSTMGA) are fusion peptide. The tract at residues 569 to 587 (KQLQARILAVERYLKDQQL) is immunosuppression. Cysteines 593 and 599 form a disulfide. N606, N611, N620, N632, and N669 each carry an N-linked (GlcNAc...) asparagine; by host glycan. Residues 628 to 662 (REINNYTSLIHSLIEESQNQQEKNEQELLELDKWA) are a coiled coil. The interval 657–678 (ELDKWASLWNWFNITNWLWYIK) is MPER; binding to GalCer. The helical transmembrane segment at 680–700 (FIMIVGGLVGLRIVFAVLSIV) threads the bilayer. At 701–851 (NRVRQGYSPL…IRQGLERILL (151 aa)) the chain is on the cytoplasmic side. The YXXL motif; contains endocytosis signal signature appears at 707-710 (YSPL). The segment at 713 to 735 (QTHLPNPRGPDRPEGIEEEGGER) is disordered. The S-palmitoyl cysteine; by host moiety is linked to residue C759. A Di-leucine internalization motif motif is present at residues 850 to 851 (LL).

It belongs to the HIV-1 env protein family. As to quaternary structure, the mature envelope protein (Env) consists of a homotrimer of non-covalently associated gp120-gp41 heterodimers. The resulting complex protrudes from the virus surface as a spike. There seems to be as few as 10 spikes on the average virion. Interacts with host CD4, CCR5 and CXCR4. Gp120 also interacts with the C-type lectins CD209/DC-SIGN and CLEC4M/DC-SIGNR (collectively referred to as DC-SIGN(R)). Gp120 and gp41 interact with GalCer. Gp120 interacts with host ITGA4/ITGB7 complex; on CD4+ T-cells, this interaction results in rapid activation of integrin ITGAL/LFA-1, which facilitates efficient cell-to-cell spreading of HIV-1. Gp120 interacts with cell-associated heparan sulfate; this interaction increases virus infectivity on permissive cells and may be involved in infection of CD4- cells. The mature envelope protein (Env) consists of a homotrimer of non-covalently associated gp120-gp41 heterodimers. The resulting complex protrudes from the virus surface as a spike. There seems to be as few as 10 spikes on the average virion. Highly glycosylated by host. The high number of glycan on the protein is reffered to as 'glycan shield' because it contributes to hide protein sequence from adaptive immune system. Post-translationally, palmitoylation of the transmembrane protein and of Env polyprotein (prior to its proteolytic cleavage) is essential for their association with host cell membrane lipid rafts. Palmitoylation is therefore required for envelope trafficking to classical lipid rafts, but not for viral replication. In terms of processing, specific enzymatic cleavages in vivo yield mature proteins. Envelope glycoproteins are synthesized as an inactive precursor that is heavily N-glycosylated and processed likely by host cell furin in the Golgi to yield the mature SU and TM proteins. The cleavage site between SU and TM requires the minimal sequence [KR]-X-[KR]-R. About 2 of the 9 disulfide bonds of gp41 are reduced by P4HB/PDI, following binding to CD4 receptor.

It localises to the virion membrane. The protein resides in the host cell membrane. Its subcellular location is the host endosome membrane. Oligomerizes in the host endoplasmic reticulum into predominantly trimers. In a second time, gp160 transits in the host Golgi, where glycosylation is completed. The precursor is then proteolytically cleaved in the trans-Golgi and thereby activated by cellular furin or furin-like proteases to produce gp120 and gp41. In terms of biological role, attaches the virus to the host lymphoid cell by binding to the primary receptor CD4. This interaction induces a structural rearrangement creating a high affinity binding site for a chemokine coreceptor like CXCR4 and/or CCR5. Acts as a ligand for CD209/DC-SIGN and CLEC4M/DC-SIGNR, which are respectively found on dendritic cells (DCs), and on endothelial cells of liver sinusoids and lymph node sinuses. These interactions allow capture of viral particles at mucosal surfaces by these cells and subsequent transmission to permissive cells. HIV subverts the migration properties of dendritic cells to gain access to CD4+ T-cells in lymph nodes. Virus transmission to permissive T-cells occurs either in trans (without DCs infection, through viral capture and transmission), or in cis (following DCs productive infection, through the usual CD4-gp120 interaction), thereby inducing a robust infection. In trans infection, bound virions remain infectious over days and it is proposed that they are not degraded, but protected in non-lysosomal acidic organelles within the DCs close to the cell membrane thus contributing to the viral infectious potential during DCs' migration from the periphery to the lymphoid tissues. On arrival at lymphoid tissues, intact virions recycle back to DCs' cell surface allowing virus transmission to CD4+ T-cells. Functionally, acts as a class I viral fusion protein. Under the current model, the protein has at least 3 conformational states: pre-fusion native state, pre-hairpin intermediate state, and post-fusion hairpin state. During fusion of viral and target intracellular membranes, the coiled coil regions (heptad repeats) assume a trimer-of-hairpins structure, positioning the fusion peptide in close proximity to the C-terminal region of the ectodomain. The formation of this structure appears to drive apposition and subsequent fusion of viral and target cell membranes. Complete fusion occurs in host cell endosomes and is dynamin-dependent, however some lipid transfer might occur at the plasma membrane. The virus undergoes clathrin-dependent internalization long before endosomal fusion, thus minimizing the surface exposure of conserved viral epitopes during fusion and reducing the efficacy of inhibitors targeting these epitopes. Membranes fusion leads to delivery of the nucleocapsid into the cytoplasm. In Homo sapiens (Human), this protein is Envelope glycoprotein gp160.